The chain runs to 389 residues: MGIKGLTALLSENAPGAMREQKFTSYLDRRVAIDASMHIYQFMIAVGRTGEQTLTNEAGEVTSHLQGMLMRTSRMLEAGIKPVYVFDGKPPTMKGGELAKRKDKREEAEAALKAAREAGNQEEVEKLSKRTVRVSKEQSMEVMKLAQLLGIPAFEAPCEAEATCAAMCKAGLVWAVGTEDMDTLTFAAPRVARNLMAPKSAEKPVLEFDYEKTIAGLGLTADQFIDLCILCGCDYTDTIRGVGPKTALKLIKEHGSIEKILEAIDTEKYPPPKDWEFAGARELFKNPEVMDVSGINLSWKAPDEEGLVEFLVKEKQFQEDRVRGVCARIRKARQGAASQNRLESFFGPPKIISSTIGKRKVEETKSGKGSKAGLNKKSKGVSGYKSKKT.

The N-domain stretch occupies residues 1–105 (MGIKGLTALL…GELAKRKDKR (105 aa)). Mg(2+) is bound at residue Asp34. Arg71 is a DNA binding site. 5 residues coordinate Mg(2+): Asp87, Glu159, Glu161, Asp180, and Asp182. The tract at residues 123-254 (EVEKLSKRTV…KTALKLIKEH (132 aa)) is I-domain. A DNA-binding site is contributed by Glu159. DNA-binding residues include Gly232 and Asp234. Residue Asp234 participates in Mg(2+) binding. The interaction with PCNA stretch occupies residues 338 to 346 (SQNRLESFF). The tract at residues 356–389 (IGKRKVEETKSGKGSKAGLNKKSKGVSGYKSKKT) is disordered. Positions 374–389 (LNKKSKGVSGYKSKKT) are enriched in basic residues.

The protein belongs to the XPG/RAD2 endonuclease family. FEN1 subfamily. In terms of assembly, interacts with PCNA. Three molecules of FEN1 bind to one PCNA trimer with each molecule binding to one PCNA monomer. PCNA stimulates the nuclease activity without altering cleavage specificity. It depends on Mg(2+) as a cofactor. In terms of processing, phosphorylated. Phosphorylation upon DNA damage induces relocalization to the nuclear plasma.

The protein localises to the nucleus. Its subcellular location is the nucleolus. The protein resides in the nucleoplasm. It localises to the mitochondrion. Its function is as follows. Structure-specific nuclease with 5'-flap endonuclease and 5'-3' exonuclease activities involved in DNA replication and repair. During DNA replication, cleaves the 5'-overhanging flap structure that is generated by displacement synthesis when DNA polymerase encounters the 5'-end of a downstream Okazaki fragment. It enters the flap from the 5'-end and then tracks to cleave the flap base, leaving a nick for ligation. Also involved in the long patch base excision repair (LP-BER) pathway, by cleaving within the apurinic/apyrimidinic (AP) site-terminated flap. Acts as a genome stabilization factor that prevents flaps from equilibrating into structures that lead to duplications and deletions. Also possesses 5'-3' exonuclease activity on nicked or gapped double-stranded DNA, and exhibits RNase H activity. Also involved in replication and repair of rDNA and in repairing mitochondrial DNA. The polypeptide is Flap endonuclease 1 (Ostreococcus tauri).